A 382-amino-acid chain; its full sequence is Ribosomal RNA large subunit methyltransferase G (382 aa).

The protein belongs to the methyltransferase superfamily. RlmG family.

The protein resides in the cytoplasm. The enzyme catalyses guanosine(1835) in 23S rRNA + S-adenosyl-L-methionine = N(2)-methylguanosine(1835) in 23S rRNA + S-adenosyl-L-homocysteine + H(+). In terms of biological role, specifically methylates the guanine in position 1835 (m2G1835) of 23S rRNA. The polypeptide is Ribosomal RNA large subunit methyltransferase G (Aliivibrio fischeri (strain MJ11) (Vibrio fischeri)).